We begin with the raw amino-acid sequence, 264 residues long: Thymidylate synthase (264 aa).

R21 is a binding site for dUMP. H51 provides a ligand contact to (6R)-5,10-methylene-5,6,7,8-tetrahydrofolate. 126 to 127 (RR) provides a ligand contact to dUMP. C146 functions as the Nucleophile in the catalytic mechanism. Residues 166 to 169 (RSAD), N177, and 207 to 209 (HLY) each bind dUMP. D169 serves as a coordination point for (6R)-5,10-methylene-5,6,7,8-tetrahydrofolate. (6R)-5,10-methylene-5,6,7,8-tetrahydrofolate is bound at residue A263.

It belongs to the thymidylate synthase family. Bacterial-type ThyA subfamily. As to quaternary structure, homodimer.

The protein localises to the cytoplasm. It carries out the reaction dUMP + (6R)-5,10-methylene-5,6,7,8-tetrahydrofolate = 7,8-dihydrofolate + dTMP. It functions in the pathway pyrimidine metabolism; dTTP biosynthesis. Its function is as follows. Catalyzes the reductive methylation of 2'-deoxyuridine-5'-monophosphate (dUMP) to 2'-deoxythymidine-5'-monophosphate (dTMP) while utilizing 5,10-methylenetetrahydrofolate (mTHF) as the methyl donor and reductant in the reaction, yielding dihydrofolate (DHF) as a by-product. This enzymatic reaction provides an intracellular de novo source of dTMP, an essential precursor for DNA biosynthesis. The protein is Thymidylate synthase of Thiobacillus denitrificans (strain ATCC 25259 / T1).